The sequence spans 70 residues: DNA gyrase inhibitor YacG (70 aa).

Positions 9, 12, 28, and 32 each coordinate Zn(2+). A disordered region spans residues 44–70; it reads SRKIPGSSIDPESIVTTNNKQDNVDEQ.

Belongs to the DNA gyrase inhibitor YacG family. In terms of assembly, interacts with GyrB. It depends on Zn(2+) as a cofactor.

Functionally, inhibits all the catalytic activities of DNA gyrase by preventing its interaction with DNA. Acts by binding directly to the C-terminal domain of GyrB, which probably disrupts DNA binding by the gyrase. This Legionella pneumophila subsp. pneumophila (strain Philadelphia 1 / ATCC 33152 / DSM 7513) protein is DNA gyrase inhibitor YacG.